Reading from the N-terminus, the 306-residue chain is Probable C-terminal domain small phosphatase (306 aa).

The span at 1–36 (MNSSPITQVSNPNDSLNHSSTNLIPSSHNSLNNYPQ) shows a compositional bias: polar residues. Disordered regions lie at residues 1–45 (MNSS…NRKK) and 61–116 (NDQN…NKDS). A compositionally biased stretch (low complexity) spans 61 to 111 (NDQNNGNNINTDNGASNNDKLQQQKQYNQQQQQQYNQHQQQQQQQQQQQQY). One can recognise an FCP1 homology domain in the interval 132–290 (RHVGLKTLVL…LDLLPLLDDL (159 aa)). D142 serves as the catalytic 4-aspartylphosphate intermediate. D142, D144, and N253 together coordinate Mg(2+). D144 (proton donor) is an active-site residue.

As to quaternary structure, monomer. It depends on Mg(2+) as a cofactor.

The protein localises to the nucleus. The catalysed reaction is O-phospho-L-seryl-[protein] + H2O = L-seryl-[protein] + phosphate. It carries out the reaction O-phospho-L-threonyl-[protein] + H2O = L-threonyl-[protein] + phosphate. May function as a phosphatase involved in the regulation of cell growth and differentiation. In Dictyostelium discoideum (Social amoeba), this protein is Probable C-terminal domain small phosphatase (fcpA).